The chain runs to 215 residues: Large ribosomal subunit protein bL25 (215 aa).

Polar residues-rich tracts occupy residues methionine 1 to lysine 19 and glutamate 206 to glutamate 215. Disordered regions lie at residues methionine 1–glycine 29 and alanine 190–glutamate 215.

The protein belongs to the bacterial ribosomal protein bL25 family. CTC subfamily. Part of the 50S ribosomal subunit; part of the 5S rRNA/L5/L18/L25 subcomplex. Contacts the 5S rRNA. Binds to the 5S rRNA independently of L5 and L18.

In terms of biological role, this is one of the proteins that binds to the 5S RNA in the ribosome where it forms part of the central protuberance. In Mycobacterium leprae (strain TN), this protein is Large ribosomal subunit protein bL25.